A 91-amino-acid chain; its full sequence is Large ribosomal subunit protein uL23c (91 aa).

It belongs to the universal ribosomal protein uL23 family. Part of the 50S ribosomal subunit.

The protein resides in the plastid. The protein localises to the chloroplast. In terms of biological role, binds to 23S rRNA. The chain is Large ribosomal subunit protein uL23c (rpl23) from Picea abies (Norway spruce).